Reading from the N-terminus, the 309-residue chain is Probable RuBisCO transcriptional regulator (309 aa).

Residues 6-63 form the HTH lysR-type domain; that stretch reads FTLDQLRILKAIVKEGSFKRAADSLYVSQPAISLQIQNLEKQLNIPLFERSNKKATLT. The segment at residues 23–42 is a DNA-binding region (H-T-H motif); it reads FKRAADSLYVSQPAISLQIQ.

The protein belongs to the LysR transcriptional regulatory family.

The protein localises to the plastid. It localises to the chloroplast. Trans-acting transcriptional regulator of RuBisCO genes (rbcL and rbcS) expression. This is Probable RuBisCO transcriptional regulator (rbcR) from Gracilaria tenuistipitata var. liui (Red alga).